The primary structure comprises 211 residues: HTH-type transcriptional repressor FabR (211 aa).

Residues 10–70 (RTRRSLVEAA…TMVDESGLML (61 aa)) form the HTH tetR-type domain. The H-T-H motif DNA-binding region spans 33-52 (SLREVAREAGIAPTSFYRHF).

In terms of assembly, homodimer.

It localises to the cytoplasm. In terms of biological role, represses the transcription of fabB, involved in unsaturated fatty acid (UFA) biosynthesis. By controlling UFA production, FabR directly influences the physical properties of the membrane bilayer. This Cronobacter sakazakii (strain ATCC BAA-894) (Enterobacter sakazakii) protein is HTH-type transcriptional repressor FabR.